We begin with the raw amino-acid sequence, 1780 residues long: Protein TIC 214 (1780 aa).

Transmembrane regions (helical) follow at residues Ile19 to Gly39, Phe68 to Leu88, Pro91 to Asn111, Val133 to Leu153, Val176 to Ile196, and Ile227 to Ile247. Positions Lys251 to Ala275 are disordered. Basic and acidic residues predominate over residues Gly254 to Gln268.

The protein belongs to the TIC214 family. As to quaternary structure, part of the Tic complex.

The protein resides in the plastid. It is found in the chloroplast inner membrane. Its function is as follows. Involved in protein precursor import into chloroplasts. May be part of an intermediate translocation complex acting as a protein-conducting channel at the inner envelope. This chain is Protein TIC 214, found in Draba nemorosa (Woodland whitlowgrass).